The following is a 443-amino-acid chain: Transcriptional adapter 2-alpha (443 aa).

S6 bears the Phosphoserine mark. The segment at 12–69 (SDKPPCRGCSSYLTEPYIKCAECGPPPFFLCLQCFTRGFEYKKHQSDHTYEIMTSDFP) adopts a ZZ-type zinc-finger fold. Positions 17, 20, 31, 34, 42, 45, 55, and 59 each coordinate Zn(2+). Residues 70-122 (VLDPSWTAQEEMALLEAVMDCGFGNWQDVANQMCTKTKEECEKHYMKHFINNP) enclose the SANT domain. Glycyl lysine isopeptide (Lys-Gly) (interchain with G-Cter in SUMO2) cross-links involve residues K132 and K138. In terms of domain architecture, SWIRM spans 356 to 443 (NSGRRSAPPL…LIREGYITKA (88 aa)). A DNA-binding region spans residues 426–435 (KTRKIYDFLI).

In terms of assembly, interacts with GCN5. Interacts with NR3C1. Associated with the P/CAF protein in the PCAF complex. Component of the PCAF complex, at least composed of TADA2L/ADA2, TADA3L/ADA3, TAF5L/PAF65-beta, TAF6L/PAF65-alpha, TAF10/TAFII30, TAF12/TAFII20, TAF9/TAFII31 and TRRAP. Component of the ADA2A-containing complex (ATAC), composed of KAT14, KAT2A, TADA2L, TADA3L, ZZ3, MBIP, WDR5, YEATS2, CCDC101 and DR1. Interacts with CCDC134.

It is found in the nucleus. The protein resides in the chromosome. In terms of biological role, component of the ATAC complex, a complex with histone acetyltransferase activity on histones H3 and H4. Required for the function of some acidic activation domains, which activate transcription from a distant site. Binds double-stranded DNA. Binds dinucleosomes, probably at the linker region between neighboring nucleosomes. Plays a role in chromatin remodeling. May promote TP53/p53 'Lys-321' acetylation, leading to reduced TP53 stability and transcriptional activity. May also promote XRCC6 acetylation thus facilitating cell apoptosis in response to DNA damage. This is Transcriptional adapter 2-alpha (Tada2a) from Mus musculus (Mouse).